The sequence spans 912 residues: Cadherin-2 (912 aa).

Positions 1–28 (MCRIAGTPPRILPPLALMLLAALQQAPI) are cleaved as a signal peptide. The propeptide occupies 29-164 (KATCEDMLCK…DSSHLKRQKR (136 aa)). 5 Cadherin domains span residues 165 to 272 (DWVI…RPEF), 273 to 387 (LHQV…PPEF), 388 to 502 (TAMT…SPYF), 503 to 609 (VPNP…DNAP), and 610 to 720 (QVNP…DVDR). The Extracellular segment spans residues 165–729 (DWVIPPINLP…RIVGAGLGTG (565 aa)). Residues Glu-175, Asp-231, Glu-233, Asp-264, Met-265, Asn-266, Asp-267, and Asn-268 each coordinate Ca(2+). The N-linked (GlcNAc...) asparagine glycan is linked to Asn-278. Asp-298, Asp-300, and Asn-306 together coordinate Ca(2+). Residue Asn-330 is glycosylated (N-linked (GlcNAc...) asparagine). Position 358 (Asp-358) interacts with Ca(2+). Asn-407, Asn-578, Asn-628, and Asn-657 each carry an N-linked (GlcNAc...) asparagine glycan. Residues 730 to 752 (AIIAILLCIIILLILVLMFVVWM) form a helical membrane-spanning segment. Residues 753–912 (KRRDKERQAK…LADMYGGGDD (160 aa)) lie on the Cytoplasmic side of the membrane. A compositionally biased stretch (low complexity) spans 869-886 (SGSTAGSLSSLNSSSSGG). A disordered region spans residues 869–890 (SGSTAGSLSSLNSSSSGGEQDY).

Homodimer (via extracellular region). Can also form heterodimers with other cadherins (via extracellular region). Dimerization occurs in trans, i.e. with a cadherin chain from another cell. Interacts with CTNNA2. As to expression, expressed at intercalated disks in the heart (at protein level).

The protein resides in the cell membrane. It is found in the sarcolemma. Its subcellular location is the cell junction. It localises to the cell surface. The protein localises to the desmosome. The protein resides in the adherens junction. Its function is as follows. Calcium-dependent cell adhesion protein; preferentially mediates homotypic cell-cell adhesion. Cadherins may thus contribute to the sorting of heterogeneous cell types, and thereby play an important role during embryonic development. Required for proper neurite branching, and pre- and postsynaptic organization. In Gallus gallus (Chicken), this protein is Cadherin-2 (CDH2).